Consider the following 202-residue polypeptide: uncharacterized protein (202 aa).

Residues 10–30 (TAAIFLLCCTSVIILFTIAVV) traverse the membrane as a helical segment.

This sequence belongs to the bacterial sugar transferase family.

Its subcellular location is the cell membrane. May be involved in the production of the exopolysaccharide (EPS) component of the extracellular matrix during biofilm formation. EPS is responsible for the adhesion of chains of cells into bundles. This is an uncharacterized protein from Bacillus subtilis (strain 168).